A 320-amino-acid polypeptide reads, in one-letter code: Porphobilinogen deaminase (320 aa).

The residue at position 248 (Cys-248) is an S-(dipyrrolylmethanemethyl)cysteine.

This sequence belongs to the HMBS family. Monomer. The cofactor is dipyrromethane.

It catalyses the reaction 4 porphobilinogen + H2O = hydroxymethylbilane + 4 NH4(+). Its pathway is porphyrin-containing compound metabolism; protoporphyrin-IX biosynthesis; coproporphyrinogen-III from 5-aminolevulinate: step 2/4. It functions in the pathway porphyrin-containing compound metabolism; chlorophyll biosynthesis. In terms of biological role, tetrapolymerization of the monopyrrole PBG into the hydroxymethylbilane pre-uroporphyrinogen in several discrete steps. This chain is Porphobilinogen deaminase, found in Synechococcus elongatus (strain ATCC 33912 / PCC 7942 / FACHB-805) (Anacystis nidulans R2).